A 205-amino-acid polypeptide reads, in one-letter code: Probable ADP-ribosylation factor At2g15310 (205 aa).

Gly2 carries the N-myristoyl glycine lipid modification. GTP contacts are provided by residues 24-31, 67-71, and 126-129; these read GLDGSGKT, DIGGQ, and NKQD.

The protein belongs to the small GTPase superfamily. Arf family.

The protein resides in the golgi apparatus. In terms of biological role, GTP-binding protein involved in protein trafficking; may modulate vesicle budding and uncoating within the Golgi apparatus. The protein is Probable ADP-ribosylation factor At2g15310 of Arabidopsis thaliana (Mouse-ear cress).